The chain runs to 110 residues: uncharacterized protein (110 aa).

3 helical membrane-spanning segments follow: residues Leu-4–Asn-26, Ala-46–Leu-68, and Leu-72–Thr-91.

It is found in the cell membrane. This is an uncharacterized protein from Bacillus subtilis (strain 168).